We begin with the raw amino-acid sequence, 158 residues long: Probable flavodoxin 1 (158 aa).

Residues 4-144 enclose the Flavodoxin-like domain; it reads ALITYASMSG…SCRAFARGFL (141 aa).

The protein belongs to the flavodoxin family. FMN serves as cofactor.

Functionally, low-potential electron donor to a number of redox enzymes. The chain is Probable flavodoxin 1 (ykuN) from Bacillus subtilis (strain 168).